The chain runs to 285 residues: Protoheme IX farnesyltransferase (285 aa).

Transmembrane regions (helical) follow at residues 8 to 28, 36 to 56, 80 to 100, 107 to 127, 133 to 153, 163 to 183, 209 to 229, 232 to 252, and 265 to 285; these read ITKP…FLFA, YVLF…ACVF, LLPV…GLSI, FISM…YTMF, FYST…GYTA, ILLF…ISIM, IFFY…LGYL, NFLL…YSNI, and FYFS…DVFF.

The protein belongs to the UbiA prenyltransferase family. Protoheme IX farnesyltransferase subfamily.

It localises to the cell membrane. It catalyses the reaction heme b + (2E,6E)-farnesyl diphosphate + H2O = Fe(II)-heme o + diphosphate. Its pathway is porphyrin-containing compound metabolism; heme O biosynthesis; heme O from protoheme: step 1/1. Its function is as follows. Converts heme B (protoheme IX) to heme O by substitution of the vinyl group on carbon 2 of heme B porphyrin ring with a hydroxyethyl farnesyl side group. The polypeptide is Protoheme IX farnesyltransferase (Buchnera aphidicola subsp. Acyrthosiphon pisum (strain Tuc7)).